The sequence spans 694 residues: Methionine--tRNA ligase (694 aa).

The 'HIGH' region signature appears at 12–22 (PYANGPLHLGH). Cys-143, Cys-146, Cys-156, and Cys-159 together coordinate Zn(2+). A 'KMSKS' region motif is present at residues 330 to 334 (KMSKS). Lys-333 is an ATP binding site. The tract at residues 552–577 (APAAPAATTKPAPSKADAAPAAVANP) is disordered. One can recognise a tRNA-binding domain in the interval 591 to 694 (DFAKLDLRIG…AGAQPGMPVR (104 aa)).

Belongs to the class-I aminoacyl-tRNA synthetase family. MetG type 1 subfamily. In terms of assembly, homodimer. It depends on Zn(2+) as a cofactor.

Its subcellular location is the cytoplasm. It carries out the reaction tRNA(Met) + L-methionine + ATP = L-methionyl-tRNA(Met) + AMP + diphosphate. Functionally, is required not only for elongation of protein synthesis but also for the initiation of all mRNA translation through initiator tRNA(fMet) aminoacylation. In Xanthomonas campestris pv. campestris (strain B100), this protein is Methionine--tRNA ligase.